Consider the following 105-residue polypeptide: Thioredoxin (105 aa).

The Thioredoxin domain maps to 2-105 (VKQIDSKDAF…KLEATINEFV (104 aa)). K3 carries the N6-acetyllysine modification. N6-succinyllysine is present on K8. Active-site nucleophile residues include C32 and C35. A disulfide bond links C32 and C35. An N6-acetyllysine modification is found at K39. An S-nitrosocysteine mark is found at C62 and C69. C73 is subject to S-nitrosocysteine; alternate. K94 carries the N6-acetyllysine; alternate modification. Position 94 is an N6-succinyllysine; alternate (K94).

It belongs to the thioredoxin family. In terms of assembly, homodimer; disulfide-linked. Interacts with TXNIP through the redox-active site. Interacts with MAP3K5 and CASP3. Interacts with APEX1; the interaction stimulates the FOS/JUN AP-1 DNA-binding activity in a redox-dependent manner. In terms of processing, in the fully reduced protein, both Cys-69 and Cys-73 are nitrosylated in response to nitric oxide (NO). When two disulfide bonds are present in the protein, only Cys-73 is nitrosylated. Cys-73 can serve as donor for nitrosylation of target proteins.

It is found in the nucleus. Its subcellular location is the cytoplasm. It localises to the secreted. Functionally, participates in various redox reactions through the reversible oxidation of its active center dithiol to a disulfide and catalyzes dithiol-disulfide exchange reactions. Plays a role in the reversible S-nitrosylation of cysteine residues in target proteins, and thereby contributes to the response to intracellular nitric oxide. Nitrosylates the active site Cys of CASP3 in response to nitric oxide (NO), and thereby inhibits caspase-3 activity. Induces the FOS/JUN AP-1 DNA binding activity in ionizing radiation (IR) cells through its oxidation/reduction status and stimulates AP-1 transcriptional activity. This Callithrix jacchus (White-tufted-ear marmoset) protein is Thioredoxin (TXN).